Here is a 174-residue protein sequence, read N- to C-terminus: Pituitary tumor-transforming gene 1 protein-interacting protein (174 aa).

The first 29 residues, 1-29, serve as a signal peptide directing secretion; the sequence is MASAVLGLTLRWVMFLSAVLLLLLPGASA. Over 30-93 the chain is Extracellular; it reads QEPPGVGCSE…RWGVCWVNFE (64 aa). The region spanning 36 to 89 is the PSI domain; the sequence is GCSEYTNRSCEECLRNVSCLWCNENKACLDYPVRKILPPASLCKLSSARWGVCW. Residues Asn-42 and Asn-51 are each glycosylated (N-linked (GlcNAc...) asparagine). The chain crosses the membrane as a helical span at residues 94 to 114; the sequence is ALIITMSVLGGSVLLGITVCC. The Cytoplasmic segment spans residues 115–174; that stretch reads CCCCRRKRSRKPDKSDERAMREQEERRVRQEERRAEMKSRHDEIRKKYGLFKEQNPYEKF. Residues 126–155 form a disordered region; it reads PDKSDERAMREQEERRVRQEERRAEMKSRH. The stretch at 127–163 forms a coiled coil; sequence DKSDERAMREQEERRVRQEERRAEMKSRHDEIRKKYG. At Tyr-171 the chain carries Phosphotyrosine.

In terms of assembly, interacts with PTTG1.

The protein resides in the cell membrane. The protein localises to the cytoplasm. Its subcellular location is the nucleus. Functionally, may facilitate PTTG1 nuclear translocation. The chain is Pituitary tumor-transforming gene 1 protein-interacting protein (Pttg1ip) from Rattus norvegicus (Rat).